The sequence spans 317 residues: Metaxin-1 (317 aa).

Residues lysine 38, lysine 41, lysine 78, and lysine 168 each participate in a glycyl lysine isopeptide (Lys-Gly) (interchain with G-Cter in ubiquitin) cross-link. Residues 272–292 traverse the membrane as a helical segment; that stretch reads ILSVLAGLAAMVGYALLSGIV.

It belongs to the metaxin family. In terms of assembly, interacts with MTX2/metaxin-2. Associates with the mitochondrial contact site and cristae organizing system (MICOS) complex, composed of at least MICOS10/MIC10, CHCHD3/MIC19, CHCHD6/MIC25, APOOL/MIC27, IMMT/MIC60, APOO/MIC23/MIC26 and QIL1/MIC13. This complex was also known under the names MINOS or MitOS complex. The MICOS complex associates with mitochondrial outer membrane proteins SAMM50, MTX1 and MTX2 (together described as components of the mitochondrial outer membrane sorting assembly machinery (SAM) complex) and DNAJC11, mitochondrial inner membrane protein TMEM11 and with HSPA9. The MICOS and SAM complexes together with DNAJC11 are part of a large protein complex spanning both membranes termed the mitochondrial intermembrane space bridging (MIB) complex. Interacts with ARMC1. Post-translationally, ubiquitinated by PRKN during mitophagy, leading to its degradation and enhancement of mitophagy. Deubiquitinated by USP30. Ubiquitous. Higher levels are seen in the kidney as compared to other tissues.

The protein resides in the mitochondrion outer membrane. Its function is as follows. Involved in transport of proteins into the mitochondrion. Essential for embryonic development. This chain is Metaxin-1 (Mtx1), found in Mus musculus (Mouse).